We begin with the raw amino-acid sequence, 712 residues long: Amino-acid acetyltransferase, mitochondrial (712 aa).

Residues 1-47 (MFVRTCRSSCNAWTNATSTTQAGSLLPPNAHRSVVLTLSLQACSART) constitute a mitochondrion transit peptide. A disordered region spans residues 55–99 (FASTTSQSKRQEAEAEEKRQVSPRLGPSAPRSSYPSSAEARQKRD). Basic and acidic residues predominate over residues 63-74 (KRQEAEAEEKRQ). Low complexity predominate over residues 81-93 (PSAPRSSYPSSAE). An N-acetyltransferase domain is found at 534 to 702 (GVPRLRLTDT…YEDVCRNIAP (169 aa)).

The protein belongs to the acetyltransferase family.

The protein resides in the mitochondrion. The enzyme catalyses L-glutamate + acetyl-CoA = N-acetyl-L-glutamate + CoA + H(+). It functions in the pathway amino-acid biosynthesis; L-arginine biosynthesis; N(2)-acetyl-L-ornithine from L-glutamate: step 1/4. Inhibited by arginine. Its function is as follows. N-acetylglutamate synthase involved in arginine biosynthesis. This chain is Amino-acid acetyltransferase, mitochondrial (arg-14), found in Neurospora crassa (strain ATCC 24698 / 74-OR23-1A / CBS 708.71 / DSM 1257 / FGSC 987).